A 367-amino-acid chain; its full sequence is Glutamate 5-kinase (367 aa).

Lysine 10 is an ATP binding site. Substrate is bound by residues serine 50, aspartate 137, and asparagine 149. Residues 169–170 and 211–217 contribute to the ATP site; these read TD and TGGMGTK. The region spanning 275–353 is the PUA domain; that stretch reads AGEITVDAGA…QQIDAILGYE (79 aa).

It belongs to the glutamate 5-kinase family.

The protein localises to the cytoplasm. It catalyses the reaction L-glutamate + ATP = L-glutamyl 5-phosphate + ADP. The protein operates within amino-acid biosynthesis; L-proline biosynthesis; L-glutamate 5-semialdehyde from L-glutamate: step 1/2. Its function is as follows. Catalyzes the transfer of a phosphate group to glutamate to form L-glutamate 5-phosphate. The polypeptide is Glutamate 5-kinase (Klebsiella pneumoniae subsp. pneumoniae (strain ATCC 700721 / MGH 78578)).